The primary structure comprises 170 residues: Cytidine diphosphoramidate kinase (170 aa).

It belongs to the APS kinase family.

The catalysed reaction is cytidine 5'-diphosphoramidate + ATP = cytidine 3'-phospho-5'-diphosphoramidate + ADP + H(+). It participates in capsule biogenesis; capsule polysaccharide biosynthesis. Functionally, involved in the biosynthesis of the O-methyl phosphoramidate (MeOPN) group found on the capsular polysaccharide (CPS) of C.jejuni. Catalyzes the ATP-dependent phosphorylation of cytidine diphosphoramidate (CDP-NH(2)) to form cytidine 3'-phosphate 5'-diphosphoramidate. Can also use other substrates such as the corresponding adenine and uridine diphosphoramidate derivatives or cytidine diphosphoramidate analogs, with lower efficiency. In Campylobacter jejuni subsp. jejuni serotype O:2 (strain ATCC 700819 / NCTC 11168), this protein is Cytidine diphosphoramidate kinase.